The chain runs to 599 residues: Protein ECM25 (599 aa).

A Rho-GAP domain is found at 181 to 359 (NRLTPLAIRQ…NLLDFFPEIA (179 aa)). 3 disordered regions span residues 362–447 (ISSP…PLPI), 468–495 (ASSSTDTLSSPTKTPSADSLPLSNSSTD), and 543–563 (ELQEKKKKNETTSKTADKFSQ). Low complexity-rich tracts occupy residues 363–373 (SSPPSSVSSSS), 396–413 (TLPRSRSPSPQRSVTSPT), and 468–483 (ASSSTDTLSSPTKTPS). Residues 543–562 (ELQEKKKKNETTSKTADKFS) show a composition bias toward basic and acidic residues.

It localises to the cytoplasm. In terms of biological role, may be involved in cell wall organization and biogenesis. This Saccharomyces cerevisiae (strain ATCC 204508 / S288c) (Baker's yeast) protein is Protein ECM25 (ECM25).